Consider the following 562-residue polypeptide: Glucocorticoid modulatory element-binding protein 1 (562 aa).

N-acetylalanine is present on Ala-2. In terms of domain architecture, SAND spans 72–156 (ASSIEANEDM…RKMMDSGQID (85 aa)). Position 103 (Cys-103) interacts with Zn(2+). Positions 129, 133, 136, and 147 each coordinate DNA. The Zn(2+) site is built by His-160, Cys-164, and Cys-168. The stretch at 311-357 (LDNRRKQVEHGEEQFLYTLADLERQLEEQKKQAQDPRLKSQTVQNVV) forms a coiled coil. Residues 360 to 384 (PVSTPKPPKRPRLQRPASTTVLSPS) form a disordered region. Residues 375–384 (PASTTVLSPS) are compositionally biased toward polar residues.

As to quaternary structure, homodimer, and heterodimer of GMEB1 and GMEB2. Interacts with the glucocorticoid receptor (NR3C1) and NCOA2/TIF2. May interact with HSP27 and CREB-binding protein (CBP). Interacts with TRIM63.

It is found in the nucleus. The protein resides in the cytoplasm. Trans-acting factor that binds to glucocorticoid modulatory elements (GME) present in the TAT (tyrosine aminotransferase) promoter and increases sensitivity to low concentrations of glucocorticoids. Also binds to the transferrin receptor promoter. This chain is Glucocorticoid modulatory element-binding protein 1 (Gmeb1), found in Rattus norvegicus (Rat).